Reading from the N-terminus, the 124-residue chain is UPF0102 protein Blon_1698/BLIJ_1758 (124 aa).

It belongs to the UPF0102 family.

This is UPF0102 protein Blon_1698/BLIJ_1758 from Bifidobacterium longum subsp. infantis (strain ATCC 15697 / DSM 20088 / JCM 1222 / NCTC 11817 / S12).